Reading from the N-terminus, the 127-residue chain is Small ribosomal subunit protein uS12 (127 aa).

The disordered stretch occupies residues 8–28; the sequence is IRTEREKARQKTKSPALKQCP. 3-methylthioaspartic acid is present on aspartate 89. The tract at residues 102-127 is disordered; sequence LDTAGVKDRKQGRSKYGTKRPKEAKK. Positions 113–127 are enriched in basic residues; that stretch reads GRSKYGTKRPKEAKK.

The protein belongs to the universal ribosomal protein uS12 family. In terms of assembly, part of the 30S ribosomal subunit. Contacts proteins S8 and S17. May interact with IF1 in the 30S initiation complex.

Its function is as follows. With S4 and S5 plays an important role in translational accuracy. In terms of biological role, interacts with and stabilizes bases of the 16S rRNA that are involved in tRNA selection in the A site and with the mRNA backbone. Located at the interface of the 30S and 50S subunits, it traverses the body of the 30S subunit contacting proteins on the other side and probably holding the rRNA structure together. The combined cluster of proteins S8, S12 and S17 appears to hold together the shoulder and platform of the 30S subunit. This Nostoc sp. (strain PCC 7120 / SAG 25.82 / UTEX 2576) protein is Small ribosomal subunit protein uS12.